The chain runs to 174 residues: Gamma-crystallin E (174 aa).

2 consecutive Beta/gamma crystallin 'Greek key' domains span residues 2 to 40 and 41 to 83; these read GKIT…RVDS and GCWM…RLIP. The segment at 84–87 is connecting peptide; the sequence is HSSS. Beta/gamma crystallin 'Greek key' domains lie at 88 to 128 and 129 to 171; these read HRIK…HVME and GYWV…RRIM.

This sequence belongs to the beta/gamma-crystallin family. In terms of tissue distribution, detected in the superior olivary complex of the auditory hindbrain.

Crystallins are the dominant structural components of the vertebrate eye lens. The chain is Gamma-crystallin E (Cryge) from Mus musculus (Mouse).